A 956-amino-acid polypeptide reads, in one-letter code: UvrABC system protein A (956 aa).

An ATP-binding site is contributed by 33-40; the sequence is GLSGSGKS. The segment at 252–279 adopts a C4-type zinc-finger fold; sequence CPYCGFSVGELEPRMFSFNSPFGACPTC. ABC transporter domains follow at residues 309–587 and 607–936; these read WRPI…KNSI and GNGL…KYLK. Residue 639-646 coordinates ATP; sequence GVSGSGKS. The C4-type zinc-finger motif lies at 738-764; the sequence is CEACKGDGIIKIEMHFLPDVYVPCEVC.

This sequence belongs to the ABC transporter superfamily. UvrA family. Forms a heterotetramer with UvrB during the search for lesions.

The protein localises to the cytoplasm. In terms of biological role, the UvrABC repair system catalyzes the recognition and processing of DNA lesions. UvrA is an ATPase and a DNA-binding protein. A damage recognition complex composed of 2 UvrA and 2 UvrB subunits scans DNA for abnormalities. When the presence of a lesion has been verified by UvrB, the UvrA molecules dissociate. The sequence is that of UvrABC system protein A from Listeria monocytogenes serovar 1/2a (strain ATCC BAA-679 / EGD-e).